A 362-amino-acid polypeptide reads, in one-letter code: Fe-S cluster assembly protein DRE2 (362 aa).

The interval 1–28 is disordered; that stretch reads MAPGLDLTPDFHPPTTTTTTTNNAPPQQ. Positions 15–28 are enriched in low complexity; the sequence is TTTTTTTNNAPPQQ. The tract at residues 24 to 165 is N-terminal SAM-like domain; sequence APPQQRTLLL…KPEYAEEEAV (142 aa). A linker region spans residues 166 to 254; that stretch reads PLRFGKKKAA…EETLLTEEDL (89 aa). Cys-264, Cys-275, Cys-278, and Cys-280 together coordinate [2Fe-2S] cluster. A fe-S binding site A region spans residues 264-280; sequence CQPQPGKKRRACKDCTC. The [4Fe-4S] cluster site is built by Cys-325, Cys-328, Cys-336, and Cys-339. 2 consecutive short sequence motifs (cx2C motif) follow at residues 325–328 and 336–339; these read CGSC and CSDC. The segment at 325-339 is fe-S binding site B; that stretch reads CGSCYLGDAFRCSDC.

It belongs to the anamorsin family. As to quaternary structure, monomer. Interacts with TAH18. Interacts with MIA40. Requires [2Fe-2S] cluster as cofactor. [4Fe-4S] cluster is required as a cofactor.

The protein localises to the cytoplasm. It localises to the mitochondrion intermembrane space. Its function is as follows. Component of the cytosolic iron-sulfur (Fe-S) protein assembly (CIA) machinery required for the maturation of extramitochondrial Fe-S proteins. Part of an electron transfer chain functioning in an early step of cytosolic Fe-S biogenesis, facilitating the de novo assembly of a [4Fe-4S] cluster on the scaffold complex CFD1-NBP35. Electrons are transferred to DRE2 from NADPH via the FAD- and FMN-containing protein TAH18. TAH18-DRE2 are also required for the assembly of the diferric tyrosyl radical cofactor of ribonucleotide reductase (RNR), probably by providing electrons for reduction during radical cofactor maturation in the catalytic small subunit RNR2. This Chaetomium globosum (strain ATCC 6205 / CBS 148.51 / DSM 1962 / NBRC 6347 / NRRL 1970) (Soil fungus) protein is Fe-S cluster assembly protein DRE2.